The chain runs to 515 residues: MATTLNPSEISDLIKTRIEAVKLSAESRNEGSVTSVSDGIVRIFGLADVMQGEMIELPNNTFALALNLERDSVGAVVLGDYENLREGDVAKTTGRILEVPVGPELLGRVVNALGEPIDGKGPLGATQTAPVERVAPGVIWRKSVDQPVQTGYKSVDAMIPIGRGQRELVIGDRQTGKTALAIDAVINQKGTGIKCVYVAIGQKASTVANIVRKLEENGALAHTVVVAATASESAAMQYISPYAGCTMGEYFMDRGEDALIVYDDLSKQAVAYRQISLLLKRPPGREAYPGDVFYLHSRLLERAARVSEDYVEKFTNGAVTGKTGSLTALPIIETQAGDVSAFVPTNVISITDGQIFLETDLFNAGIRPAVNAGISVSRVGGAAQTKIIKKLSGGIRISLAQYRELAAFAQFASDLDEATRKQLERGQRVTELMKQKQYAPMSIANQALSIYAVNEGYLDDVPVNKLLAFEEGLHAHFANTQGELVSKINSTGGWDNDIEASFKKGIQEFKTTGTW.

171-178 contributes to the ATP binding site; sequence GDRQTGKT.

It belongs to the ATPase alpha/beta chains family. As to quaternary structure, F-type ATPases have 2 components, CF(1) - the catalytic core - and CF(0) - the membrane proton channel. CF(1) has five subunits: alpha(3), beta(3), gamma(1), delta(1), epsilon(1). CF(0) has three main subunits: a(1), b(2) and c(9-12). The alpha and beta chains form an alternating ring which encloses part of the gamma chain. CF(1) is attached to CF(0) by a central stalk formed by the gamma and epsilon chains, while a peripheral stalk is formed by the delta and b chains.

The protein localises to the cell inner membrane. It catalyses the reaction ATP + H2O + 4 H(+)(in) = ADP + phosphate + 5 H(+)(out). Its function is as follows. Produces ATP from ADP in the presence of a proton gradient across the membrane. The alpha chain is a regulatory subunit. The sequence is that of ATP synthase subunit alpha from Xanthomonas oryzae pv. oryzae (strain MAFF 311018).